Here is a 789-residue protein sequence, read N- to C-terminus: Ataxin-1 (789 aa).

The span at 1 to 30 (MKSNQERSNECLPPKKREIPATSRPSEEKA) shows a compositional bias: basic and acidic residues. Residues 1–73 (MKSNQERSNE…GTSGEHGLQG (73 aa)) form a disordered region. Lysine 16 is covalently cross-linked (Glycyl lysine isopeptide (Lys-Gly) (interchain with G-Cter in SUMO)). Residues serine 81 and serine 87 each carry the phosphoserine modification. Disordered stretches follow at residues 188-237 (QAPG…RATS) and 296-397 (EVLN…KPGH). Residue lysine 193 forms a Glycyl lysine isopeptide (Lys-Gly) (interchain with G-Cter in SUMO) linkage. Phosphoserine is present on serine 213. The residue at position 217 (threonine 217) is a Phosphothreonine. Polar residues-rich tracts occupy residues 218-235 (QQNQYIHISSSPQSSGRA), 310-325 (ASSSVELSLGKTSSKS), and 360-386 (PNSSTPSADLETQQATHREASPSTLND). The residue at position 228 (serine 228) is a Phosphoserine. A self-association region spans residues 468–578 (VGSPDMDTPG…TEDFIQSAEI (111 aa)). The tract at residues 512–789 (LVTQAAYPAM…CIEGRSNVGK (278 aa)) is interaction with USP7. The RNA-binding stretch occupies residues 514–740 (TQAAYPAMVQ…FLTKIEPSKP (227 aa)). The 132-residue stretch at 536-667 (SPAAASPTLP…SLTLKNLKNG (132 aa)) folds into the AXH domain. Glycyl lysine isopeptide (Lys-Gly) (interchain with G-Cter in SUMO) cross-links involve residues lysine 583, lysine 670, and lysine 719. The segment at 736 to 772 (EPSKPTATRKRRWSAPETRKLEKSEDEPPLTLPKPSL) is disordered. A Phosphoserine modification is found at serine 749. Positions 768 to 771 (PKPS) match the Nuclear localization signal motif.

It belongs to the ATXN1 family. In terms of assembly, homooligomer. Interacts with CIC. Interacts with ANP32A, PQBP1, UBQLN4, ATXN1L and USP7. Directly interacts with RBPJ; this interaction is disrupted in the presence of Notch intracellular domain. Competes with ATXN1L for RBPJ-binding. Found in a complex with CIC and ATXN1L. Ubiquitinated by UBE3A, leading to its degradation by the proteasome. In terms of processing, phosphorylation at Ser-749 increases the pathogenicity of proteins with an expanded polyglutamine tract. Post-translationally, sumoylation is dependent on nuclear localization and phosphorylation at Ser-749. It is reduced in the presence of an expanded polyglutamine tract.

The protein resides in the cytoplasm. The protein localises to the nucleus. Its function is as follows. Chromatin-binding factor that repress Notch signaling in the absence of Notch intracellular domain by acting as a CBF1 corepressor. Binds to the HEY promoter and might assist, along with NCOR2, RBPJ-mediated repression. Binds RNA in vitro. May be involved in RNA metabolism. In concert with CIC and ATXN1L, involved brain development. This is Ataxin-1 (Atxn1) from Rattus norvegicus (Rat).